A 329-amino-acid polypeptide reads, in one-letter code: Beta-ketoacyl-[acyl-carrier-protein] synthase III (329 aa).

Residues cysteine 113 and histidine 255 contribute to the active site. The segment at 256-260 is ACP-binding; it reads QANQR. Asparagine 285 is a catalytic residue.

Belongs to the thiolase-like superfamily. FabH family. In terms of assembly, homodimer.

The protein resides in the cytoplasm. The catalysed reaction is malonyl-[ACP] + acetyl-CoA + H(+) = 3-oxobutanoyl-[ACP] + CO2 + CoA. It participates in lipid metabolism; fatty acid biosynthesis. In terms of biological role, catalyzes the condensation reaction of fatty acid synthesis by the addition to an acyl acceptor of two carbons from malonyl-ACP. Catalyzes the first condensation reaction which initiates fatty acid synthesis and may therefore play a role in governing the total rate of fatty acid production. Possesses both acetoacetyl-ACP synthase and acetyl transacylase activities. Its substrate specificity determines the biosynthesis of branched-chain and/or straight-chain of fatty acids. This chain is Beta-ketoacyl-[acyl-carrier-protein] synthase III, found in Chlorobium chlorochromatii (strain CaD3).